We begin with the raw amino-acid sequence, 121 residues long: SLTHRKFGGSGGSPFSGLSSIAVRSGSYLDXIIIDGVHHGGSGGNLSPTFTFGSGEYISNMTIRSGDYIDNISFETNMGRRFGPYGGSGGSANTLSNVKVIQINGSAGDYLDSLDIYYEQY.

The region spanning 1–120 (SLTHRKFGGS…LDSLDIYYEQ (120 aa)) is the Jacalin-type lectin domain.

Its function is as follows. Mixed specificity lectin with anti-HIV activity. Binds to HIV envelope glycoproteins, including exterior membrane glycoprotein gp120, and inhibits viral entry into cells. Binding to gp120 is dependent on gp120 being glycosylated, and is inhibited by mannose, glucose and N-acetylglucosamine. This chain is Griffithsin, found in Griffithsia sp. (strain Q66D336) (Red alga).